The sequence spans 257 residues: Short chain dehydrogenase helC (257 aa).

Residues Met1–Ala22 form the signal peptide. Residue Val13 participates in NADP(+) binding. The N-linked (GlcNAc...) asparagine glycan is linked to Asn46. 2 residues coordinate NADP(+): Asp60 and Asn87. The N-linked (GlcNAc...) asparagine glycan is linked to Asn110. Residues Tyr154, Lys158, Ile185, and Thr187 each coordinate NADP(+). The Proton acceptor role is filled by Tyr154. The Lowers pKa of active site Tyr role is filled by Lys158.

This sequence belongs to the short-chain dehydrogenases/reductases (SDR) family.

The protein operates within mycotoxin biosynthesis. In terms of biological role, short chain dehydrogenase; part of the gene cluster that mediates the biosynthesis of helvolic acid, an antibacterial nortriterpenoid. Protostadienol synthase helA cyclizes (3S)-oxidosqualene to (17Z)-protosta-17(20),24-dien-3-beta-ol (protostadienol). The synthesis of protostadienol is followed by several steps of monooxygenation, dehydrogenation, and acyl transfer to yield the final helvolic acid. Following the cyclization to the tetracyclic protostadienol by helA, cytochrome P450 monooxygenases helB1-mediated and helB2-mediated oxidation at C-4 and C-16, acyltransferase helD2-dependent acetylation of 16-OH, oxidation of C-21 by cytochrome P450 monooxygenase helB4, and short chain dehydrogenase helC-dependent oxidative decarboxylation yield the fusidane skeleton. This intermediate is further modified in three additional steps mediated by the cytochrome P450 monooxygenase helB3, the acyltransferase helD1, and the 3-ketosteroid 1-dehydrogenase helE to give helvolic acid. Compared with the late stages in the biosynthesis of helvolic acid, enzymes involved in the early stage modifications act in a relatively strict order. The hydroxylation of C-16 by helB1 and subsequent acetylation by helD2 should occur before the helB3-mediated oxidation of C-21. C-4 demethylation in fusidane-type antibiotics proceeds in an unusual manner though it is also achieved by oxidative decarboxylation. The methyl group at C-4 beta position is oxidized by helB1 and subsequently removed by the short chain dehydrogenase helC. This is Short chain dehydrogenase helC from Aspergillus fumigatus (strain ATCC MYA-4609 / CBS 101355 / FGSC A1100 / Af293) (Neosartorya fumigata).